A 93-amino-acid polypeptide reads, in one-letter code: C-C motif chemokine 3 (93 aa).

The signal sequence occupies residues 1-24 (MKVAVAALAVLLCAMALCSQVFSA). Disulfide bonds link Cys34-Cys58 and Cys35-Cys74.

It belongs to the intercrine beta (chemokine CC) family. In terms of assembly, self-associates. Also heterodimer of MIP-1-alpha(4-69) and MIP-1-beta(3-69). Interacts with CCR1.

The protein localises to the secreted. In terms of biological role, monokine with inflammatory and chemokinetic properties. Binds to CCR1, CCR4 and CCR5. One of the major HIV-suppressive factors produced by CD8+ T-cells. Recombinant MIP-1-alpha induces a dose-dependent inhibition of different strains of HIV-1, HIV-2, and simian immunodeficiency virus (SIV). This Bos taurus (Bovine) protein is C-C motif chemokine 3 (CCL3).